The chain runs to 917 residues: Bifunctional aspartokinase/homoserine dehydrogenase 2, chloroplastic (917 aa).

A chloroplast-targeting transit peptide spans 1-89 (MQGLAVSCQL…EVNTYLPKGD (89 aa)). The aspartokinase stretch occupies residues 90–338 (MWSVHKFGGT…VSEAVILSTL (249 aa)). The interval 339–563 (SYQEAWEMSY…LSKTTLAVGI (225 aa)) is interface. ACT domains lie at 413–488 (VEGT…VING) and 494–571 (AVGL…LIGG). Residues 564 to 917 (IGPGLIGGAL…RLASYLGAPS (354 aa)) form a homoserine dehydrogenase region. Residues Ile-569 and Thr-650 each coordinate NAD(+). Ile-569, Thr-650, and Lys-674 together coordinate NADP(+). Residues Ile-569, Thr-650, and Lys-674 each contribute to the NADPH site. 4 residues coordinate Na(+): Glu-701, Val-704, Ala-706, and Leu-708. Residues Gly-759 and Glu-762 each contribute to the NADP(+) site. The L-homoserine site is built by Glu-762 and Asp-773. Lys-777 serves as the catalytic Proton donor. An NAD(+)-binding site is contributed by Gly-894. Gly-894 is an NADP(+) binding site. An NADPH-binding site is contributed by Gly-894.

The protein in the N-terminal section; belongs to the aspartokinase family. In the C-terminal section; belongs to the homoserine dehydrogenase family. In terms of assembly, homo- or heterodimer. A metal cation serves as cofactor.

The protein resides in the plastid. It is found in the chloroplast. The catalysed reaction is L-homoserine + NADP(+) = L-aspartate 4-semialdehyde + NADPH + H(+). The enzyme catalyses L-homoserine + NAD(+) = L-aspartate 4-semialdehyde + NADH + H(+). It catalyses the reaction L-aspartate + ATP = 4-phospho-L-aspartate + ADP. Its pathway is amino-acid biosynthesis; L-lysine biosynthesis via DAP pathway; (S)-tetrahydrodipicolinate from L-aspartate: step 1/4. It functions in the pathway amino-acid biosynthesis; L-methionine biosynthesis via de novo pathway; L-homoserine from L-aspartate: step 1/3. The protein operates within amino-acid biosynthesis; L-methionine biosynthesis via de novo pathway; L-homoserine from L-aspartate: step 3/3. It participates in amino-acid biosynthesis; L-threonine biosynthesis; L-threonine from L-aspartate: step 1/5. Its pathway is amino-acid biosynthesis; L-threonine biosynthesis; L-threonine from L-aspartate: step 3/5. Functionally, bifunctional aspartate kinase and homoserine dehydrogenase that catalyzes the first and the third steps toward the synthesis of lysine, methionine and threonine from aspartate. The protein is Bifunctional aspartokinase/homoserine dehydrogenase 2, chloroplastic (AKHSDH2) of Zea mays (Maize).